The sequence spans 513 residues: Sphingolipid C9-methyltransferase (513 aa).

The next 2 membrane-spanning stretches (helical) occupy residues 52-72 and 74-94; these read ILFS…GLGF and TWVF…WSIM. Residues 222-223, 259-267, 285-290, and 315-316 contribute to the S-adenosyl-L-methionine site; these read YT, VLDIGCGWG, TLGRNQ, and YR.

This sequence belongs to the CFA/CMAS family.

The protein localises to the membrane. The catalysed reaction is a (4E,8E)-4-sphinga-4,8-dienine ceramide + S-adenosyl-L-methionine = a 9-methyl-(4E,8E)-sphinga-4,8-dienine ceramide + S-adenosyl-L-homocysteine + H(+). It functions in the pathway lipid metabolism; sphingolipid metabolism. Catalyzes methylation of the sphingoid base component of glucosylceramides (GluCers) at the C9-position. Sphingolipid C9-methylation requires 4,8-desaturated ceramides as substrates. Glucosylceramides play important roles in growth, differentiation and pathogenicity. The methyl group at the C9-position distinguishes fungal glucosylceramides from those of plants and animals, and may thus play a role in host-pathogen interactions enabling the host to recognize the fungal attack and initiate specific defense responses. Not necessary for vegetative growth at low temperatures, but plays a role in hyphal formation on solid medium. In Candida albicans (strain SC5314 / ATCC MYA-2876) (Yeast), this protein is Sphingolipid C9-methyltransferase.